The sequence spans 644 residues: Cell pattern formation-associated protein StuA (644 aa).

Positions A18–H33 are enriched in low complexity. Disordered stretches follow at residues A18 to P58 and Q86 to G120. Over residues P38–Q47 the composition is skewed to polar residues. Residues L87–S104 show a composition bias toward low complexity. An HTH APSES-type domain is found at R124–P230. The H-T-H motif DNA-binding region spans G158 to E179. The segment at G239–R644 is disordered. Positions S253 to P269 are enriched in polar residues. Positions S315–S328 are enriched in low complexity. Composition is skewed to polar residues over residues A334–V357, Q371–N383, and P395–S404. A compositionally biased stretch (basic and acidic residues) spans E456–Y465. The segment covering G509–Q524 has biased composition (low complexity). The segment covering W525–N544 has biased composition (polar residues). Residues K584–K612 form a nuclear localization domain region. The span at H635–R644 shows a compositional bias: polar residues.

This sequence belongs to the EFG1/PHD1/stuA family.

Its subcellular location is the nucleus. Its function is as follows. Transcription factor that regulates asexual reproduction. Binds the StuA-response elements (StRE) with the consensus sequence 5'-(A/T)CGCG(T/A)N(A/C)-3' at the promoters of target genes. Required for pathogenicity and positively regulates the synthesis of the mycotoxin alternariol. Acts as a positive regulator of Tox3 but is not required for the expression of ToxA. Also acts as a central regulator of carbon metabolism including glycolysis, the TCA cycle, and amino acid synthesis. In Phaeosphaeria nodorum (strain SN15 / ATCC MYA-4574 / FGSC 10173) (Glume blotch fungus), this protein is Cell pattern formation-associated protein StuA.